Here is a 158-residue protein sequence, read N- to C-terminus: NADPH-dependent 7-cyano-7-deazaguanine reductase (158 aa).

Residues 1 to 37 (MAKRSIKSETSPELQLGRPVTAPDSPETARLDRVPNP) form a disordered region. Positions 27-37 (ETARLDRVPNP) are enriched in basic and acidic residues. Catalysis depends on C56, which acts as the Thioimide intermediate. D63 acts as the Proton donor in catalysis. Substrate is bound by residues 78-80 (VES) and 97-98 (HE).

The protein belongs to the GTP cyclohydrolase I family. QueF type 1 subfamily.

It localises to the cytoplasm. The catalysed reaction is 7-aminomethyl-7-carbaguanine + 2 NADP(+) = 7-cyano-7-deazaguanine + 2 NADPH + 3 H(+). The protein operates within tRNA modification; tRNA-queuosine biosynthesis. Its function is as follows. Catalyzes the NADPH-dependent reduction of 7-cyano-7-deazaguanine (preQ0) to 7-aminomethyl-7-deazaguanine (preQ1). This is NADPH-dependent 7-cyano-7-deazaguanine reductase from Bradyrhizobium sp. (strain BTAi1 / ATCC BAA-1182).